The following is a 544-amino-acid chain: MSSTQGRKRSRLACETCRELKRKCDGNQPCGACVRFEYDCIYNKQTNTNKRRKTVEQDKEAPLPSPPVHVDKDARPYVTSPHHLQSLEANSGAAFFRRLALRLDPKNAPRMHTFSWNAFLGARRTSQVPVSRPVTEMLSQEGMESLSEIYFEKLDPIYGFIDRDWISRITQNRWSGLICDESEDAVLCGIAAIACLFSEVEPLPLELDLIESARFILEQNMSDTPSVTGVTGWLLRVIYLRTAETPHTAWMASSILMHMLEAAGLHCEPSEESVFQVAEEKVDSELRRRLFAVSAHLNIWISFDMGRSRTILCNSTLEMPSTREGDYTIEIMELLPYSTDLDPHKTHDAAELEASLSTVLKRVHSVPPSIMAQCNLTLCLCRRLQSMNTSFTGKTLEQILSITQRGIEAAQAIIDARAPWHQMANVPFQIICLLLAIDTRESLAQLNDAMQCLNNIATVYNTNATKEALNTASLLILMQQRRKEKCASNLSNIVKSFPILPLSETQVEAPLQQMDDMRWFNNLAGELSGFDYSDLDRFLSQSMF.

The segment at residues 14–40 (CETCRELKRKCDGNQPCGACVRFEYDC) is a DNA-binding region (zn(2)-C6 fungal-type). Positions 50–71 (KRRKTVEQDKEAPLPSPPVHVD) are disordered.

The protein resides in the nucleus. May act as a transcriptional repressor of multidrug resistance genes. In Gibberella zeae (strain ATCC MYA-4620 / CBS 123657 / FGSC 9075 / NRRL 31084 / PH-1) (Wheat head blight fungus), this protein is Protein RDR1 (RDR1).